A 291-amino-acid polypeptide reads, in one-letter code: Oxidative stress-responsive serine-rich protein 1 (291 aa).

The interval 29–139 (ISLSVGEGPS…NAGENSTSLD (111 aa)) is disordered. A compositionally biased stretch (basic residues) spans 65–83 (STRKSSRGAVRTQRRRRSK). The span at 95 to 105 (CSTTAPPSSSQ) shows a compositional bias: polar residues. T143 carries the phosphothreonine modification.

The polypeptide is Oxidative stress-responsive serine-rich protein 1 (Oser1) (Mus musculus (Mouse)).